A 332-amino-acid polypeptide reads, in one-letter code: Ribosomal RNA small subunit methyltransferase C (332 aa).

The protein belongs to the methyltransferase superfamily. RsmC family. In terms of assembly, monomer.

The protein resides in the cytoplasm. The enzyme catalyses guanosine(1207) in 16S rRNA + S-adenosyl-L-methionine = N(2)-methylguanosine(1207) in 16S rRNA + S-adenosyl-L-homocysteine + H(+). Functionally, specifically methylates the guanine in position 1207 of 16S rRNA in the 30S particle. The sequence is that of Ribosomal RNA small subunit methyltransferase C from Pseudomonas syringae pv. syringae (strain B728a).